Reading from the N-terminus, the 57-residue chain is Large ribosomal subunit protein eL20 (57 aa).

A compositionally biased stretch (polar residues) spans 1-10 (MSEFTVTGTF). The interval 1 to 21 (MSEFTVTGTFESRDGNQPFEK) is disordered.

The protein belongs to the eukaryotic ribosomal protein eL20 family. In terms of assembly, part of the 50S ribosomal subunit. Binds 23S rRNA.

This chain is Large ribosomal subunit protein eL20, found in Halomicrobium mukohataei (strain ATCC 700874 / DSM 12286 / JCM 9738 / NCIMB 13541) (Haloarcula mukohataei).